Here is a 499-residue protein sequence, read N- to C-terminus: Apolipoprotein N-acyltransferase (499 aa).

A run of 6 helical transmembrane segments spans residues 18-38 (FSPY…LIIT), 50-70 (LGFL…YISI), 82-102 (IIII…FVIL), 105-125 (FFFP…AWMI), 156-176 (PIIG…MCVL), and 182-202 (SYYP…LNFF). Residues 217-461 (IQGNISQHTY…NDFLLEEVFS (245 aa)) enclose the CN hydrolase domain. The Proton acceptor role is filled by Glu257. Lys320 is a catalytic residue. Cys372 (nucleophile) is an active-site residue. Residues 476 to 496 (LLFFSIICFIISFFIKIKLIF) form a helical membrane-spanning segment.

This sequence belongs to the CN hydrolase family. Apolipoprotein N-acyltransferase subfamily.

It is found in the cell membrane. The catalysed reaction is N-terminal S-1,2-diacyl-sn-glyceryl-L-cysteinyl-[lipoprotein] + a glycerophospholipid = N-acyl-S-1,2-diacyl-sn-glyceryl-L-cysteinyl-[lipoprotein] + a 2-acyl-sn-glycero-3-phospholipid + H(+). Its pathway is protein modification; lipoprotein biosynthesis (N-acyl transfer). Its function is as follows. Catalyzes the phospholipid dependent N-acylation of the N-terminal cysteine of apolipoprotein, the last step in lipoprotein maturation. This is Apolipoprotein N-acyltransferase from Wigglesworthia glossinidia brevipalpis.